Reading from the N-terminus, the 290-residue chain is ATP synthase gamma chain (290 aa).

The protein belongs to the ATPase gamma chain family. As to quaternary structure, F-type ATPases have 2 components, CF(1) - the catalytic core - and CF(0) - the membrane proton channel. CF(1) has five subunits: alpha(3), beta(3), gamma(1), delta(1), epsilon(1). CF(0) has three main subunits: a, b and c.

Its subcellular location is the cell inner membrane. Its function is as follows. Produces ATP from ADP in the presence of a proton gradient across the membrane. The gamma chain is believed to be important in regulating ATPase activity and the flow of protons through the CF(0) complex. In Thiobacillus denitrificans (strain ATCC 25259 / T1), this protein is ATP synthase gamma chain.